We begin with the raw amino-acid sequence, 243 residues long: Small ribosomal subunit protein uS2c (243 aa).

It belongs to the universal ribosomal protein uS2 family.

The protein localises to the plastid. It localises to the chloroplast. In Cyanidium caldarium (Red alga), this protein is Small ribosomal subunit protein uS2c (rps2).